Here is a 227-residue protein sequence, read N- to C-terminus: NAD(P)H-quinone oxidoreductase subunit K, chloroplastic (227 aa).

Positions 43, 44, 108, and 139 each coordinate [4Fe-4S] cluster.

It belongs to the complex I 20 kDa subunit family. In terms of assembly, NDH is composed of at least 16 different subunits, 5 of which are encoded in the nucleus. Requires [4Fe-4S] cluster as cofactor.

It localises to the plastid. The protein localises to the chloroplast thylakoid membrane. It catalyses the reaction a plastoquinone + NADH + (n+1) H(+)(in) = a plastoquinol + NAD(+) + n H(+)(out). It carries out the reaction a plastoquinone + NADPH + (n+1) H(+)(in) = a plastoquinol + NADP(+) + n H(+)(out). Its function is as follows. NDH shuttles electrons from NAD(P)H:plastoquinone, via FMN and iron-sulfur (Fe-S) centers, to quinones in the photosynthetic chain and possibly in a chloroplast respiratory chain. The immediate electron acceptor for the enzyme in this species is believed to be plastoquinone. Couples the redox reaction to proton translocation, and thus conserves the redox energy in a proton gradient. This Ranunculus macranthus (Large buttercup) protein is NAD(P)H-quinone oxidoreductase subunit K, chloroplastic.